We begin with the raw amino-acid sequence, 449 residues long: Hyaluronidase (449 aa).

Residues 1 to 23 (MYHIWIKFLAAWIFLKRFNGVHV) form the signal peptide. 2 disulfide bridges follow: C47-C340 and C211-C227. Residues N67, N103, and N111 are each glycosylated (N-linked (GlcNAc...) asparagine). Catalysis depends on E135, which acts as the Proton donor. An N-linked (GlcNAc...) asparagine glycan is attached at N153. N357 carries N-linked (GlcNAc...) asparagine glycosylation. 3 cysteine pairs are disulfide-bonded: C365-C376, C370-C427, and C429-C438. The N-linked (GlcNAc...) asparagine glycan is linked to N401. The 12-residue stretch at 427-438 (CQCYQGWKGLYC) folds into the EGF-like domain.

Belongs to the glycosyl hydrolase 56 family. As to quaternary structure, monomer. Expressed by the venom gland.

Its subcellular location is the secreted. The catalysed reaction is Random hydrolysis of (1-&gt;4)-linkages between N-acetyl-beta-D-glucosamine and D-glucuronate residues in hyaluronate.. Its function is as follows. Snake venom endo-hyaluronidase that degrades hyaluronan to smaller oligosaccharide fragments. In venom, it is not toxic by itself, but increases the diffusion of other venom proteins by degrading the extracellular matrix. In addition, it displays antiedematogenic activity. In Echis pyramidum leakeyi (Leakey's carpet viper), this protein is Hyaluronidase.